A 660-amino-acid polypeptide reads, in one-letter code: Bifunctional polymyxin resistance protein ArnA (660 aa).

Positions 1 to 304 (MKTVVFAYHD…TLGLVQGSRL (304 aa)) are formyltransferase ArnAFT. (6R)-10-formyltetrahydrofolate is bound at residue 86–88 (HLI). Catalysis depends on histidine 104, which acts as the Proton donor; for formyltransferase activity. Residues arginine 114 and 136-140 (VKRAD) each bind (6R)-10-formyltetrahydrofolate. The segment at 314–660 (RRTRVLILGV…RTVDLTDKPS (347 aa)) is dehydrogenase ArnADH. NAD(+) contacts are provided by residues aspartate 347 and 368–369 (DI). UDP-alpha-D-glucuronate contacts are provided by residues alanine 393, tyrosine 398, and 432–433 (TS). Glutamate 434 (proton acceptor; for decarboxylase activity) is an active-site residue. UDP-alpha-D-glucuronate contacts are provided by residues arginine 460, asparagine 492, 526–535 (KLIDGGKQKR), and tyrosine 613. The active-site Proton donor; for decarboxylase activity is the arginine 619.

This sequence in the N-terminal section; belongs to the Fmt family. UDP-L-Ara4N formyltransferase subfamily. In the C-terminal section; belongs to the NAD(P)-dependent epimerase/dehydratase family. UDP-glucuronic acid decarboxylase subfamily. In terms of assembly, homohexamer, formed by a dimer of trimers.

The catalysed reaction is UDP-alpha-D-glucuronate + NAD(+) = UDP-beta-L-threo-pentopyranos-4-ulose + CO2 + NADH. It carries out the reaction UDP-4-amino-4-deoxy-beta-L-arabinose + (6R)-10-formyltetrahydrofolate = UDP-4-deoxy-4-formamido-beta-L-arabinose + (6S)-5,6,7,8-tetrahydrofolate + H(+). It functions in the pathway nucleotide-sugar biosynthesis; UDP-4-deoxy-4-formamido-beta-L-arabinose biosynthesis; UDP-4-deoxy-4-formamido-beta-L-arabinose from UDP-alpha-D-glucuronate: step 1/3. The protein operates within nucleotide-sugar biosynthesis; UDP-4-deoxy-4-formamido-beta-L-arabinose biosynthesis; UDP-4-deoxy-4-formamido-beta-L-arabinose from UDP-alpha-D-glucuronate: step 3/3. It participates in bacterial outer membrane biogenesis; lipopolysaccharide biosynthesis. Functionally, bifunctional enzyme that catalyzes the oxidative decarboxylation of UDP-glucuronic acid (UDP-GlcUA) to UDP-4-keto-arabinose (UDP-Ara4O) and the addition of a formyl group to UDP-4-amino-4-deoxy-L-arabinose (UDP-L-Ara4N) to form UDP-L-4-formamido-arabinose (UDP-L-Ara4FN). The modified arabinose is attached to lipid A and is required for resistance to polymyxin and cationic antimicrobial peptides. The polypeptide is Bifunctional polymyxin resistance protein ArnA (Escherichia coli O157:H7).